The chain runs to 348 residues: RNA 3'-terminal phosphate cyclase (348 aa).

Residues Gln-107 and 290–294 (HLADQ) each bind ATP. Residue His-316 is the Tele-AMP-histidine intermediate of the active site.

It belongs to the RNA 3'-terminal cyclase family. Type 1 subfamily.

The protein localises to the cytoplasm. It catalyses the reaction a 3'-end 3'-phospho-ribonucleotide-RNA + ATP = a 3'-end 2',3'-cyclophospho-ribonucleotide-RNA + AMP + diphosphate. Its function is as follows. Catalyzes the conversion of 3'-phosphate to a 2',3'-cyclic phosphodiester at the end of RNA. The mechanism of action of the enzyme occurs in 3 steps: (A) adenylation of the enzyme by ATP; (B) transfer of adenylate to an RNA-N3'P to produce RNA-N3'PP5'A; (C) and attack of the adjacent 2'-hydroxyl on the 3'-phosphorus in the diester linkage to produce the cyclic end product. The biological role of this enzyme is unknown but it is likely to function in some aspects of cellular RNA processing. This is RNA 3'-terminal phosphate cyclase (rtcA) from Nostoc sp. (strain PCC 7120 / SAG 25.82 / UTEX 2576).